A 155-amino-acid polypeptide reads, in one-letter code: Ribosomal RNA large subunit methyltransferase H (155 aa).

Residues Leu-72, Gly-103, and Leu-122–Leu-127 each bind S-adenosyl-L-methionine.

It belongs to the RNA methyltransferase RlmH family. In terms of assembly, homodimer.

Its subcellular location is the cytoplasm. It catalyses the reaction pseudouridine(1915) in 23S rRNA + S-adenosyl-L-methionine = N(3)-methylpseudouridine(1915) in 23S rRNA + S-adenosyl-L-homocysteine + H(+). Functionally, specifically methylates the pseudouridine at position 1915 (m3Psi1915) in 23S rRNA. This chain is Ribosomal RNA large subunit methyltransferase H, found in Variovorax paradoxus (strain S110).